We begin with the raw amino-acid sequence, 122 residues long: Large ribosomal subunit protein uL14 (122 aa).

The protein belongs to the universal ribosomal protein uL14 family. As to quaternary structure, part of the 50S ribosomal subunit. Forms a cluster with proteins L3 and L19. In the 70S ribosome, L14 and L19 interact and together make contacts with the 16S rRNA in bridges B5 and B8.

Its function is as follows. Binds to 23S rRNA. Forms part of two intersubunit bridges in the 70S ribosome. This chain is Large ribosomal subunit protein uL14, found in Ruegeria pomeroyi (strain ATCC 700808 / DSM 15171 / DSS-3) (Silicibacter pomeroyi).